Consider the following 275-residue polypeptide: Centromere protein V (275 aa).

Low complexity-rich tracts occupy residues 1 to 10 (MRRSRSSAAA) and 17 to 51 (RSGASGASAAPAASAAAALAPSATRTRRSASQAGS). The tract at residues 1–109 (MRRSRSSAAA…ATPTSSASNL (109 aa)) is disordered. Residues Ser18 and Ser21 each carry the phosphoserine modification. At Arg43 the chain carries Omega-N-methylarginine. Residues 79–100 (GEPPPPELALLPPPPPPPPTPA) show a composition bias toward pro residues. Phosphothreonine is present on residues Thr98, Thr101, and Thr103. A CENP-V/GFA domain is found at 148–260 (HTGGCHCGAV…TEEFNGSDWE (113 aa)). 7 residues coordinate Zn(2+): Cys152, Cys154, Cys172, Cys174, Cys177, Cys216, and Cys219. Phosphoserine is present on Ser257.

Belongs to the Gfa family. Zn(2+) serves as cofactor.

It localises to the chromosome. Its subcellular location is the centromere. The protein localises to the kinetochore. It is found in the nucleus. The protein resides in the cytoplasm. It localises to the cytoskeleton. Its subcellular location is the spindle. Its function is as follows. Required for distribution of pericentromeric heterochromatin in interphase nuclei and for centromere formation and organization, chromosome alignment and cytokinesis. The protein is Centromere protein V (CENPV) of Homo sapiens (Human).